A 961-amino-acid polypeptide reads, in one-letter code: E4 ubiquitin-protein ligase UFD2 (961 aa).

Residues 880 to 954 (DVPDEFLDPL…LCFKKQKKEE (75 aa)) enclose the U-box domain.

Belongs to the ubiquitin conjugation factor E4 family. As to quaternary structure, interacts with CDC48. Interacts with the ubiquitin-like domain of RAD23 and DSK2. Interacts with PEX29.

It localises to the cytoplasm. It is found in the nucleus. It catalyses the reaction S-ubiquitinyl-[E2 ubiquitin-conjugating enzyme]-L-cysteine + [acceptor protein]-L-lysine = [E2 ubiquitin-conjugating enzyme]-L-cysteine + N(6)-ubiquitinyl-[acceptor protein]-L-lysine.. The protein operates within protein modification; protein ubiquitination. Functionally, E4 ubiquitin chain-elongation enzyme specifically involved in polyubiquitin chain assembly. Binds to CDC48 and elongates mono- and diubiquitinated ERAD substrates presented by the UFD1-NPL4-CDC48/p97 (UNC) AAA ATPase complex to a chain length of 4 to 6 ubiquitin moieties. Delivers these polyubiquitinated substrates to RAD23 and DSK2, which target them to the proteasome. Has E3 ubiquitin-protein ligase activity, accepting ubiquitin from its cognate E2 ubiquitin-conjugating enzyme UBC4. Enhances ubiquitination at 'Lys-48', but not at 'Lys-29' of the Ub moiety. Promotes ubiquitin chain elongation at 'Lys-48' on the DOA10 substrate PEX29. Also involved in the proteolytic processing of the ER-bound transcription factor SPT23. This chain is E4 ubiquitin-protein ligase UFD2 (UFD2), found in Saccharomyces cerevisiae (strain ATCC 204508 / S288c) (Baker's yeast).